The sequence spans 276 residues: Proteasome subunit beta type-8 (276 aa).

Positions 1–72 are cleaved as a propeptide — removed in mature form; the sequence is MALLEVCGAP…KNIRKEMVHG (72 aa). The Nucleophile role is filled by T73.

The protein belongs to the peptidase T1B family. In terms of assembly, the 26S proteasome consists of a 20S proteasome core and two 19S regulatory subunits. The 20S proteasome core is composed of 28 subunits that are arranged in four stacked rings, resulting in a barrel-shaped structure. The two end rings are each formed by seven alpha subunits, and the two central rings are each formed by seven beta subunits. The catalytic chamber with the active sites is on the inside of the barrel. Component of the immunoproteasome, where it displaces the equivalent housekeeping subunit PSMB5. Component of the spermatoproteasome, a form of the proteasome specifically found in testis. Directly interacts with POMP. Autocleaved. The resulting N-terminal Thr residue of the mature subunit is responsible for the nucleophile proteolytic activity.

Its subcellular location is the cytoplasm. It localises to the nucleus. It carries out the reaction Cleavage of peptide bonds with very broad specificity.. The proteasome is a multicatalytic proteinase complex which is characterized by its ability to cleave peptides with Arg, Phe, Tyr, Leu, and Glu adjacent to the leaving group at neutral or slightly basic pH. The proteasome has an ATP-dependent proteolytic activity. This subunit is involved in antigen processing to generate class I binding peptides. May participate in the generation of spliced peptides resulting from the ligation of two separate proteasomal cleavage products that are not contiguous in the parental protein. Required for adipocyte differentiation. The sequence is that of Proteasome subunit beta type-8 (PSMB8) from Canis lupus familiaris (Dog).